Reading from the N-terminus, the 364-residue chain is Chorismate synthase (364 aa).

The NADP(+) site is built by arginine 48 and arginine 54. Residues arginine 125–serine 127, glycine 282, lysine 297–serine 301, and arginine 323 contribute to the FMN site.

Belongs to the chorismate synthase family. Homotetramer. FMNH2 is required as a cofactor.

The catalysed reaction is 5-O-(1-carboxyvinyl)-3-phosphoshikimate = chorismate + phosphate. It functions in the pathway metabolic intermediate biosynthesis; chorismate biosynthesis; chorismate from D-erythrose 4-phosphate and phosphoenolpyruvate: step 7/7. Its function is as follows. Catalyzes the anti-1,4-elimination of the C-3 phosphate and the C-6 proR hydrogen from 5-enolpyruvylshikimate-3-phosphate (EPSP) to yield chorismate, which is the branch point compound that serves as the starting substrate for the three terminal pathways of aromatic amino acid biosynthesis. This reaction introduces a second double bond into the aromatic ring system. The polypeptide is Chorismate synthase (Chloroflexus aggregans (strain MD-66 / DSM 9485)).